The chain runs to 473 residues: Spliceosome-associated protein CWC27 homolog (473 aa).

At serine 2 the chain carries N-acetylserine. The region spanning 11 to 166 (TNGKVLLKTT…NPHKIKSCEV (156 aa)) is the PPIase cyclophilin-type domain. Residues 177–193 (REIKRPKKEKPEEEVKK) are compositionally biased toward basic and acidic residues. Disordered regions lie at residues 177 to 386 (REIK…EDQT) and 399 to 473 (QAIA…KERR). The stretch at 206–230 (SFGEEAEEEEEEVNRVSQSMKGKSK) forms a coiled coil. Basic and acidic residues predominate over residues 231 to 241 (SSHDLLKDDPH). Acidic residues predominate over residues 257–275 (GDLDDDGEDESAEYDEYVD). Basic and acidic residues-rich tracts occupy residues 276–287 (GDEKNLMRERIA), 305–348 (EVEK…KRSE), and 360–372 (EYRR…EALR). A coiled-coil region spans residues 307 to 378 (EKKSVSRSEE…EALRKQQSKK (72 aa)). Phosphoserine is present on serine 347. Over residues 405 to 419 (PENDIPETEVEDDEG) the composition is skewed to acidic residues. Basic and acidic residues-rich tracts occupy residues 426 to 438 (QFED…KDAS) and 458 to 473 (RREE…KERR).

It belongs to the cyclophilin-type PPIase family. In terms of assembly, part of the activated spliceosome B/catalytic step 1 spliceosome, one of the forms of the spliceosome which has a well-formed active site but still cannot catalyze the branching reaction and is composed at least of 52 proteins, the U2, U5 and U6 snRNAs and the pre-mRNA. Recruited during early steps of activated spliceosome B maturation, it is probably one of the first proteins released from this complex as he matures to the spliceosome C complex. Component of the minor spliceosome, which splices U12-type introns.

It is found in the nucleus. Its function is as follows. As part of the spliceosome, plays a role in pre-mRNA splicing. Probable inactive PPIase with no peptidyl-prolyl cis-trans isomerase activity. As a component of the minor spliceosome, involved in the splicing of U12-type introns in pre-mRNAs. This is Spliceosome-associated protein CWC27 homolog from Macaca fascicularis (Crab-eating macaque).